Here is a 306-residue protein sequence, read N- to C-terminus: Replication termination factor 2 (306 aa).

The disordered stretch occupies residues 193 to 276 (AKLEKKTKKP…RSIADSEESE (84 aa)). Residues 226 to 240 (GKPEEASLDSREKKT) show a composition bias toward basic and acidic residues. The segment covering 243–255 (APKSTAMNESSSG) has biased composition (polar residues). Residue serine 287 is modified to Phosphoserine.

This sequence belongs to the rtf2 family. In terms of assembly, interacts with DDI2; probably also interacts with DDI1. In terms of processing, undergoes proteasomal degradation, via DDI1 and DDI2. Removal from stalled replisomes and degradation are required for genome stability.

The protein resides in the chromosome. Replication termination factor which is a component of the elongating replisome. Required for ATR pathway signaling upon DNA damage and has a positive activity during DNA replication. Might function to facilitate fork pausing at replication fork barriers like the rDNA. May be globally required to stimulate ATR signaling after the fork stalls or encounters a lesion. Interacts with nascent DNA. The protein is Replication termination factor 2 of Homo sapiens (Human).